The sequence spans 417 residues: Neuropeptide FF receptor 2 (417 aa).

At 1 to 45 the chain is on the extracellular side; the sequence is MSEKWDSNSSESWNHIWSGNDTQHHWYSDINITYVNYYLHQPQVA. N-linked (GlcNAc...) asparagine glycans are attached at residues asparagine 8, asparagine 20, and asparagine 31. A helical transmembrane segment spans residues 46–66; it reads AVFISSYLLIFVLCMVGNTVV. Residues 67–82 lie on the Cytoplasmic side of the membrane; it reads CFIVIRNRHMHTVTNF. The helical transmembrane segment at 83–103 threads the bilayer; that stretch reads FILNLAISDLLVGIFCMPITL. Topologically, residues 104 to 119 are extracellular; sequence LDNIIAGWPFGSSMCK. An intrachain disulfide couples cysteine 118 to cysteine 206. A helical transmembrane segment spans residues 120–140; it reads ISGLVQGISVAASVFTLVAIA. The Cytoplasmic segment spans residues 141 to 160; the sequence is VDRFRCVVYPFKPKLTVKTA. The chain crosses the membrane as a helical span at residues 161 to 181; it reads FVTIVIIWGLAIAIMTPSAIM. At 182 to 217 the chain is on the extracellular side; it reads LHVQEEKYYRVRLSSHNKTSTVYWCREDWPRHEMRR. A glycan (N-linked (GlcNAc...) asparagine) is linked at asparagine 198. The helical transmembrane segment at 218-238 threads the bilayer; that stretch reads IYTTVLFATIYLAPLSLIVIM. The Cytoplasmic segment spans residues 239–274; sequence YARIGASLFKTAAHCTGKQRPVQWHVSKKKQKVIKM. Residues 275 to 295 traverse the membrane as a helical segment; it reads LLTVALLFILSWLPLWTLMML. Residues 296–310 lie on the Extracellular side of the membrane; sequence SDYTDLSPNKLRIIN. The helical transmembrane segment at 311–331 threads the bilayer; sequence IYIYPFAHWLAFCNSSVNPII. At 332 to 417 the chain is on the cytoplasmic side; sequence YGFFNENFRN…MGEATNSTVA (86 aa). A disordered region spans residues 382 to 401; it reads SQNPGGENLGCGKSADNPTQ.

Belongs to the G-protein coupled receptor 1 family.

The protein resides in the cell membrane. Functionally, receptor for NPAF (A-18-F-amide) and NPFF (F-8-F-amide) neuropeptides, also known as morphine-modulating peptides. Can also be activated by a variety of naturally occurring or synthetic FMRF-amide like ligands. This receptor mediates its action by association with G proteins that activate a phosphatidylinositol-calcium second messenger system. This chain is Neuropeptide FF receptor 2 (Npffr2), found in Mus musculus (Mouse).